Reading from the N-terminus, the 357-residue chain is Probable leucine aminopeptidase TRV_02148.1 (357 aa).

The N-terminal stretch at 1 to 15 (MKVLAALALSALAMA) is a signal peptide. Asn-76 is a glycosylation site (N-linked (GlcNAc...) asparagine). Zn(2+) is bound by residues His-167 and Asp-185. A disordered region spans residues 169 to 188 (DSINGKNPQGEAPGADDNGS). Residue Asn-186 is glycosylated (N-linked (GlcNAc...) asparagine). Zn(2+) contacts are provided by Glu-224 and Asp-251. N-linked (GlcNAc...) asparagine glycosylation occurs at Asn-269. A disulfide bond links Cys-291 and Cys-295. A Zn(2+)-binding site is contributed by His-324.

It belongs to the peptidase M28 family. M28E subfamily. Monomer. Requires Zn(2+) as cofactor.

The protein localises to the secreted. Functionally, probable extracellular aminopeptidase which contributes to pathogenicity. This Trichophyton verrucosum (strain HKI 0517) protein is Probable leucine aminopeptidase TRV_02148.1.